Reading from the N-terminus, the 828-residue chain is MKLSRRSFMKANAVAAAAAAAGLSVPGVARAVVGQQEAIKWDKAPCRFCGTGCGVLVGTQQGRVVACQGDPDAPVNRGLNCIKGYFLPKIMYGKDRLTQPLLRMKNGKYDKEGEFTPITWDQAFDVMEDKFKTALKEKGPESIGMFGSGQWTIWEGYAASKLFKAGFRSNNIDPNARHCMASAVVGFMRTFGMDEPMGCYDDIEQADAFVLWGSNMAEMHPILWSRITNRRLSNQNVTVAVLSTYQHRSFELADNGIIFTPQSDLVILNYIANYIIQNNAINQDFFSKHVNLRKGATDIGYGLRPTHPLEKAAKNPGSDASEPMSFEDYKAFVAEYTLEKTAEMTGVPKDQLEQLAQLYADPNKKVISYWTMGFNQHTRGVWANNLVYNLHLLTGKISQPGCGPFSLTGQPSACGTAREVGTFAHRLPADMVVTNEKHRDICEKKWNIPSGTIPAKIGLHAVAQDRALKDGKLNVYWTMCTNNMQAGPNINEERMPGWRDPRNFIIVSDPYPTVSALAADLILPTAMWVEKEGAYGNAERRTQFWRQQVQAPGEAKSDLWQLVQFSRRFKTEEVWPEELLAKKPELRGKTLYDVLYATPEVSKFPVSELAEDQLNDESRELGFYLQKGLFEEYAWFGRGHGHDLAPFDDYHKARGLRWPVVNGKETQWRYSEGNDPYVKAGEGYKFYGKPDGKAVIFALPFEPAAEAPDEEYDLWLSTGRVLEHWHTGSMTRRVPELHRAFPEAVLFIHPLDAKARDLRRGDKVKVVSRRGEVISIVETRGRNRPPQGLVYMPFFDAAQLVNKLTLDATDPLSKETDFKKCAVKLEKV.

The tat-type signal signal peptide spans 1 to 31 (MKLSRRSFMKANAVAAAAAAAGLSVPGVARA). Residues 39–95 (IKWDKAPCRFCGTGCGVLVGTQQGRVVACQGDPDAPVNRGLNCIKGYFLPKIMYGKD) enclose the 4Fe-4S Mo/W bis-MGD-type domain. [4Fe-4S] cluster is bound by residues cysteine 46, cysteine 49, cysteine 53, and cysteine 81. Mo-bis(molybdopterin guanine dinucleotide) is bound by residues lysine 83, glutamine 150, asparagine 175, cysteine 179, 212–219 (WGSNMAEM), 243–247 (STYQH), 262–264 (QSD), methionine 372, glutamine 376, asparagine 482, 508–509 (SD), lysine 531, aspartate 558, and 718–727 (TGRVLEHWHT). Substrate is bound at residue phenylalanine 794. The Mo-bis(molybdopterin guanine dinucleotide) site is built by asparagine 802 and lysine 819.

It belongs to the prokaryotic molybdopterin-containing oxidoreductase family. NasA/NapA/NarB subfamily. As to quaternary structure, component of the periplasmic nitrate reductase NapAB complex composed of NapA and NapB. It depends on [4Fe-4S] cluster as a cofactor. Mo-bis(molybdopterin guanine dinucleotide) is required as a cofactor. In terms of processing, predicted to be exported by the Tat system. The position of the signal peptide cleavage has not been experimentally proven.

Its subcellular location is the periplasm. The enzyme catalyses 2 Fe(II)-[cytochrome] + nitrate + 2 H(+) = 2 Fe(III)-[cytochrome] + nitrite + H2O. Catalytic subunit of the periplasmic nitrate reductase complex NapAB. Receives electrons from NapB and catalyzes the reduction of nitrate to nitrite. The protein is Periplasmic nitrate reductase of Escherichia coli O81 (strain ED1a).